A 982-amino-acid polypeptide reads, in one-letter code: Protein lin-10 (982 aa).

Residues 1–16 show a composition bias toward polar residues; sequence MSSEAVAQATAATTSP. Disordered regions lie at residues 1–55, 119–228, 269–327, 432–511, and 525–593; these read MSSE…MIPP, QPAL…RTDS, TVAD…STVP, FAQQ…GTDD, and QREQ…SKET. Positions 33–44 are enriched in gly residues; it reads KGGGAGGGGGGE. The segment covering 119–134 has biased composition (low complexity); sequence QPALQQPRPSSQASSS. Composition is skewed to polar residues over residues 143-156 and 169-190; these read RQTA…NVSP and ETSG…SSDV. The span at 211–228 shows a compositional bias: basic and acidic residues; the sequence is GEEKSEEKRKLSGDRTDS. Residues 301–318 show a composition bias toward polar residues; sequence SLNQLRSSFNLPDDSTTV. Composition is skewed to low complexity over residues 432–445 and 454–464; these read FAQQ…APTP and PSTSSGPSGAL. The span at 490–501 shows a compositional bias: polar residues; the sequence is NGTSTSTTNGAQ. Residues 539–550 are compositionally biased toward low complexity; it reads QEAATAAQEAAE. The span at 577–593 shows a compositional bias: basic and acidic residues; sequence GAERRGSVDKKKNSKET. In terms of domain architecture, PID spans 604–788; it reads GVLFRARYLG…VLNSQELLGD (185 aa). PDZ domains are found at residues 801-886 and 892-968; these read EVVV…TVVS and EVRI…MPTS.

Interacts (via N-terminus) with egl-9 isoform e (via catalytic domain); the interaction regulates its trafficking; the interaction is direct. Interacts with rab-6.2 (in GTP-bound form). Post-translationally, phosphorylated on multiple Ser and Thr residues by cdk-5 which regulates its localization. In terms of processing, may be hydroxylated by egl-9 isoform e on multiple Pro residues which may prevent phosphorylation by cdk-5. In terms of tissue distribution, expressed in vulval epithelial cells and neurons.

The protein resides in the golgi apparatus. It is found in the golgi stack membrane. It localises to the trans-Golgi network membrane. Its subcellular location is the cytoplasm. The protein localises to the synapse. The protein resides in the perikaryon. In terms of biological role, required specifically for the determination of 3 vulval precursor cell fates P5.p, P6.p and P7.p during late second and early third larval stages; required for basolateral localization of receptor tyrosine kinase let-23. Could have a general but redundant role in development, functioning in diverse cell lineages to control cell fates. Regulates the trafficking of the glr-1 subunit of AMPA-type glutamate receptors (AMPRs) in the ventral nerve cord. This may be partly through interacting with the small GTPase rab-6.2 in its active GTP-bound state. The chain is Protein lin-10 from Caenorhabditis elegans.